A 420-amino-acid chain; its full sequence is Tyrosine--tRNA ligase (420 aa).

Tyrosine 36 provides a ligand contact to L-tyrosine. The 'HIGH' region signature appears at 41–50; the sequence is PTADSMHIGH. 2 residues coordinate L-tyrosine: tyrosine 170 and glutamine 174. Positions 231 to 235 match the 'KMSKS' region motif; it reads KFGKS. Lysine 234 lines the ATP pocket. The region spanning 353–420 is the S4 RNA-binding domain; sequence TNIVDFIVEA…KKKYFMVKYK (68 aa).

Belongs to the class-I aminoacyl-tRNA synthetase family. TyrS type 1 subfamily. Homodimer.

The protein localises to the cytoplasm. The catalysed reaction is tRNA(Tyr) + L-tyrosine + ATP = L-tyrosyl-tRNA(Tyr) + AMP + diphosphate + H(+). In terms of biological role, catalyzes the attachment of tyrosine to tRNA(Tyr) in a two-step reaction: tyrosine is first activated by ATP to form Tyr-AMP and then transferred to the acceptor end of tRNA(Tyr). This chain is Tyrosine--tRNA ligase, found in Staphylococcus carnosus (strain TM300).